The chain runs to 535 residues: CTP synthase (535 aa).

Residues 1–267 are amidoligase domain; it reads MTKYIFVTGG…DQIVCDHLKL (267 aa). Serine 13 provides a ligand contact to CTP. Serine 13 serves as a coordination point for UTP. ATP is bound at residue 14–19; that stretch reads SLGKGI. Tyrosine 54 contacts L-glutamine. Aspartate 71 contacts ATP. Mg(2+)-binding residues include aspartate 71 and glutamate 141. CTP contacts are provided by residues 148-150, 188-193, and lysine 224; these read DIE and KTKPTQ. UTP-binding positions include 188-193 and lysine 224; that span reads KTKPTQ. The region spanning 292–534 is the Glutamine amidotransferase type-1 domain; sequence RIALVGKYVE…VQASITNKES (243 aa). Glycine 354 serves as a coordination point for L-glutamine. The active-site Nucleophile; for glutamine hydrolysis is cysteine 381. Residues 382 to 385, glutamate 405, and arginine 462 contribute to the L-glutamine site; that span reads LGMQ. Catalysis depends on residues histidine 507 and glutamate 509.

This sequence belongs to the CTP synthase family. In terms of assembly, homotetramer.

It catalyses the reaction UTP + L-glutamine + ATP + H2O = CTP + L-glutamate + ADP + phosphate + 2 H(+). The catalysed reaction is L-glutamine + H2O = L-glutamate + NH4(+). The enzyme catalyses UTP + NH4(+) + ATP = CTP + ADP + phosphate + 2 H(+). It participates in pyrimidine metabolism; CTP biosynthesis via de novo pathway; CTP from UDP: step 2/2. Allosterically activated by GTP, when glutamine is the substrate; GTP has no effect on the reaction when ammonia is the substrate. The allosteric effector GTP functions by stabilizing the protein conformation that binds the tetrahedral intermediate(s) formed during glutamine hydrolysis. Inhibited by the product CTP, via allosteric rather than competitive inhibition. Catalyzes the ATP-dependent amination of UTP to CTP with either L-glutamine or ammonia as the source of nitrogen. Regulates intracellular CTP levels through interactions with the four ribonucleotide triphosphates. The protein is CTP synthase of Bacillus cytotoxicus (strain DSM 22905 / CIP 110041 / 391-98 / NVH 391-98).